The following is a 294-amino-acid chain: 3-methyl-2-oxobutanoate hydroxymethyltransferase (294 aa).

Over residues 1–12 the composition is skewed to polar residues; it reads MSASAESTNATP. The interval 1–21 is disordered; it reads MSASAESTNATPYGTLPPTAA. Asp-69 and Asp-112 together coordinate Mg(2+). 3-methyl-2-oxobutanoate is bound by residues 69 to 70, Asp-112, and Lys-141; that span reads DS. Residue Glu-143 coordinates Mg(2+). Glu-210 acts as the Proton acceptor in catalysis.

Belongs to the PanB family. As to quaternary structure, homodecamer; pentamer of dimers. Mg(2+) serves as cofactor.

The protein resides in the cytoplasm. It catalyses the reaction 3-methyl-2-oxobutanoate + (6R)-5,10-methylene-5,6,7,8-tetrahydrofolate + H2O = 2-dehydropantoate + (6S)-5,6,7,8-tetrahydrofolate. It functions in the pathway cofactor biosynthesis; (R)-pantothenate biosynthesis; (R)-pantoate from 3-methyl-2-oxobutanoate: step 1/2. Functionally, catalyzes the reversible reaction in which hydroxymethyl group from 5,10-methylenetetrahydrofolate is transferred onto alpha-ketoisovalerate to form ketopantoate. The polypeptide is 3-methyl-2-oxobutanoate hydroxymethyltransferase (Albidiferax ferrireducens (strain ATCC BAA-621 / DSM 15236 / T118) (Rhodoferax ferrireducens)).